Reading from the N-terminus, the 354-residue chain is 3-isopropylmalate dehydrogenase (354 aa).

Substrate is bound by residues R96, R106, R132, and D223. Mg(2+)-binding residues include D223, D247, and D251. Position 283–295 (283–295 (GSAPDIAGQGKAD)) interacts with NAD(+).

It belongs to the isocitrate and isopropylmalate dehydrogenases family. LeuB type 2 subfamily. In terms of assembly, homodimer. The cofactor is Mg(2+). Mn(2+) serves as cofactor.

The protein resides in the cytoplasm. It catalyses the reaction (2R,3S)-3-isopropylmalate + NAD(+) = 4-methyl-2-oxopentanoate + CO2 + NADH. The protein operates within amino-acid biosynthesis; L-leucine biosynthesis; L-leucine from 3-methyl-2-oxobutanoate: step 3/4. In terms of biological role, catalyzes the oxidation of 3-carboxy-2-hydroxy-4-methylpentanoate (3-isopropylmalate) to 3-carboxy-4-methyl-2-oxopentanoate. The product decarboxylates to 4-methyl-2 oxopentanoate. The chain is 3-isopropylmalate dehydrogenase from Thermobifida fusca (strain YX).